Consider the following 68-residue polypeptide: Purkinje cell protein 4-like protein 1 (68 aa).

The span at 1-16 (MSELNTKTPPAANQAS) shows a compositional bias: polar residues. Residues 1–42 (MSELNTKTPPAANQASDPEEKGKPGSIKKAEEEEEIDIDLTA) are disordered. Phosphothreonine is present on Thr8. Residues 18–31 (PEEKGKPGSIKKAE) are compositionally biased toward basic and acidic residues. The 24-residue stretch at 45 to 68 (TEKAALAIQGKFRRFQKRKKDSSS) folds into the IQ domain.

It belongs to the PCP4 family. As to expression, expressed in laminar and nuclear structures of the CNS.

This chain is Purkinje cell protein 4-like protein 1 (Pcp4l1), found in Mus musculus (Mouse).